Consider the following 514-residue polypeptide: Probable transposase for insertion sequence element IS1353 (514 aa).

Positions 172–216 (KGDTSLEQRHEALLRELAELESQNQRLRMENAILEKASELIKKDM) form a coiled coil. The region spanning 346 to 510 (HASAPNTKWL…SPIEYRHAVG (165 aa)) is the Integrase catalytic domain. The Mg(2+) site is built by Asp-357 and Asp-417.

It belongs to the transposase 8 family.

Functionally, probably involved in the transposition of insertion sequence IS1353. The protein is Probable transposase for insertion sequence element IS1353 of Shigella flexneri.